The chain runs to 617 residues: Arrestin domain-containing protein B (617 aa).

A C2 domain is found at methionine 1 to leucine 109. Ca(2+)-binding residues include aspartate 20, aspartate 27, aspartate 76, aspartate 78, and aspartate 84.

It belongs to the arrestin family. Ca(2+) is required as a cofactor.

This Dictyostelium discoideum (Social amoeba) protein is Arrestin domain-containing protein B (adcB).